A 488-amino-acid polypeptide reads, in one-letter code: Serine/threonine-protein kinase haspin homolog hrk1 (488 aa).

Residues 156-488 (TFEIQKIGEA…SLLNWVRQKY (333 aa)) enclose the Protein kinase domain. Residues 162–170 (IGEASYSEV) and Lys-184 each bind ATP. The active-site Proton acceptor is the Asp-305.

It belongs to the protein kinase superfamily. Ser/Thr protein kinase family. Haspin subfamily. Interacts with pds5 and swi6.

Its subcellular location is the cytoplasm. The protein resides in the chromosome. It catalyses the reaction L-seryl-[protein] + ATP = O-phospho-L-seryl-[protein] + ADP + H(+). The enzyme catalyses L-threonyl-[protein] + ATP = O-phospho-L-threonyl-[protein] + ADP + H(+). Its function is as follows. Serine/threonine haspin-like protein kinase involved in cell cycle regulation. Acts in chromosomal passenger complex (CPC) targeting to centromeres by phosphorylating histone H3 at 'Thr3' (H3T3ph). In Schizosaccharomyces pombe (strain 972 / ATCC 24843) (Fission yeast), this protein is Serine/threonine-protein kinase haspin homolog hrk1 (hrk1).